The sequence spans 429 residues: MKKMTNLRCIAAQTIEKVVEQGQSLSNVLPAAQKSVGDKDAALLQELCYGVLRTLPQLEWVIGRLMSRPMTGKQRAVHFLIMVGLYQLMFTRIPAHAALAETVEGAVALKRPQLKGLINGVLRQFQRQQDELMQQMNDGDQQYLHPKWLLERLKRAWPAQWKQIVDANNQRPPMWLRVNRQHHSRDAWLTLLEESGKQAFAHPQHGDALRLESPCAVGQLPGFDQGWITVQDVSAQGCVALLAPRDGEQILDLCAAPGGKTTHILEAAPQAKVMAVDVDAQRLARVSENLQRLTMQAEVKQGDGRTPAAWCGDTQFDRILLDAPCSATGVIRRHPDIKWLRRDRDIAELAALQQQILDAVWPHLKPGGTLLYATCSVLPEENHVQIGQFLQRHADATLIETGDLTQPGIQVFPQADGGDGFYYAKLVKQ.

S-adenosyl-L-methionine is bound by residues 254–260 (CAAPGGK), aspartate 277, aspartate 303, and aspartate 322. Residue cysteine 375 is the Nucleophile of the active site.

It belongs to the class I-like SAM-binding methyltransferase superfamily. RsmB/NOP family.

It is found in the cytoplasm. The enzyme catalyses cytidine(967) in 16S rRNA + S-adenosyl-L-methionine = 5-methylcytidine(967) in 16S rRNA + S-adenosyl-L-homocysteine + H(+). In terms of biological role, specifically methylates the cytosine at position 967 (m5C967) of 16S rRNA. The polypeptide is Ribosomal RNA small subunit methyltransferase B (Erwinia tasmaniensis (strain DSM 17950 / CFBP 7177 / CIP 109463 / NCPPB 4357 / Et1/99)).